We begin with the raw amino-acid sequence, 1811 residues long: MHLYNEWLPPPVAEETKKEKESFARVVRCVKELHRPDDPESVYATLKWISVIELFVRAKSELSVEDVSELVEIGLQIFHSSENKLYAQVRWGNVLVRLINKFRKKLSLKVQWRPLYDTLIHAHFSRSPGPEGWRLRQRHFMAVTSLIRSCRRFFPQGAASEIWSEFMSLLENPWHNSSFEGSGFVRLFLPTNPENQDFFSEKWIKNVLELWDSIPNCQFWNSQWTSVLARVIKNCSFIDWESYLPMLFSRFLNMFEVPVANGSGSYPFSVDVPRNTRFLFSNRTTTPSKSIAQSIVYFLKPGSSAHEQLEKLVNLLEQYYHPSNGGRWTYSLERFLLHLVIAFQKRLQREQQDPDSLPATCLGKPERVAFVGVVLKLIDRGQYSKNEHLSETVAAATSMLSYVEPSLVLPFVASRFHLALETTTATHQLKTAMMSVAFAGRSILQSSMSTAKSQDLGGDVDDRMFLDLIGISLSNALLGMDANDPPKTLATMQLIGSIFSNMAVLDDSSDDLSFMTMASFSEWLDEFLCRLIALLQHLEPNSVINEGLSSSATSGTFLVEDGPYYYCMLEILLGRLSGSLYNQALKKISKFVQTNILPGAIAEVGLLCCACVHSTPEEAVAQIVEPMLLAVISSLKEIPVNGYGGKGSAETLVSNKQDKQTLSPALEAAIDYQLKVLSVAITYGGSSLLPYKGLLIEAISSAFNSSSWKVNGAGDHLLRSLLGSLILYYPIDQYKCLSRHPAAPALEEWISTKASSKDEQVAHSRWHVPTQEETQFANELLDLHLQSALDDLLSICQSNIHSDAGDEKTHLKVTLLRIDSTLQGVLSCLPDFRPSPRHDMVEDLQFFIAGASGSCVGSAEIREKTAITIHAACKYLLEKKSDDSILLILIIRIMDALGNYGSLEYDEWSNHRQAWKLESAAIVEPPANFITEFNSKGKRRPRWALIDKAYMHNTWRSSQSSYHLFRTDGNFSPPEPLTFLVDDLLTLCLHNYETVRVLAGKSLIKLLKRWPQLLSKCVLSLTENLRKPDVQEYVVLGSCAILSSHSVLKHLTTDPKSFSSFLLGILSSSHHESMKSQKAIIELFVKYNIHFAGLSRNILRSLESHVEGSTSGDLVSQIGSMSFDSSSLHWRYNLMANRVLLLLVMSSRIDPSFSLKILDETAGHFLKNLKSQLPQTRILAISALNILLKESPHKMQGKDQPSVSSQETENANSSLDLALSQIFREEGFFKETFESLSHIHITDTDSSSRGNHGSSSFQSMADKSITRFYFEFSASWPRTPSWISLLGSDIFYPSFARIFKRLAQECGVPVLLALKSPLEEFCNAKERPKQCVAAEALAGVLHSDVNGLFNEWDSWIMVQLQNVILGQSVESIPEWAACIRYAVTGKGKQGTKIPVMRQQILDCIVAPLPPTATTTVVAKRYAFLSAALIELSPPKMPVTEVKLHIVLLDELICNMSHSSAQIREAIGVILSVLCSNIRLRMSYQQEYPTEEGKTDVDSQLKEENWFKLISAKASEAVKNIQQASISDSLDTSTDVDMGNAQSNGDSLDDVKWMETLFHFIISSFKSGRASYLLDVIAGFLYPVMSLQETSHKDLSILAKAAFELLKWRVFPESHLQKVIGVILSSADDSNWRIRSSTLTYLRTFMYRHTFILTHEDKQKIWKTVEKLLVDSQVEVREHAAAVLAGLMKGGDEDFAADFRDRSYAEANSIQKRRNRRKSSSTQSIAGVHGAVLGLVASVLSVPYDMPSWLPEHVTLLARFAGEPTPIKSTVTKAVAEFRRTHADTWNIQKDSFTEDQLEILADTSSSSSYFA.

6 HEAT repeats span residues 563 to 599 (PYYY…ILPG), 1156 to 1193 (KILD…ESPH), 1442 to 1479 (KLHI…NIRL), 1613 to 1650 (SHLQ…RHTF), 1655 to 1692 (EDKQ…GGDE), and 1746 to 1783 (PSWL…THAD). Residues 1626–1711 (ADDSNWRIRS…SYAEANSIQK (86 aa)) are bromodomain-like (BRDL).

The protein belongs to the BLM10 family. In terms of assembly, interacts with the 26S proteasomes.

In terms of biological role, associated component of the proteasome that specifically recognizes acetylated histones and promotes ATP- and ubiquitin-independent degradation of core histones during DNA damage response. Recognizes and binds acetylated histones via its bromodomain-like (BRDL) region and activates the proteasome by opening the gated channel for substrate entry. Binds to the core proteasome via its C-terminus, which occupies the same binding sites as the proteasomal ATPases, opening the closed structure of the proteasome via an active gating mechanism. involved in DNA damage response: binds to acetylated histones and promotes degradation of histones. The chain is Proteasome activator subunit 4 (PA200) from Arabidopsis thaliana (Mouse-ear cress).